The chain runs to 567 residues: Urease subunit alpha (567 aa).

A Urease domain is found at G129–F567. Residues H134, H136, and K217 each contribute to the Ni(2+) site. K217 carries the N6-carboxylysine modification. Residue H219 coordinates substrate. 2 residues coordinate Ni(2+): H246 and H272. H320 serves as the catalytic Proton donor. D360 is a Ni(2+) binding site.

It belongs to the metallo-dependent hydrolases superfamily. Urease alpha subunit family. In terms of assembly, heterotrimer of UreA (gamma), UreB (beta) and UreC (alpha) subunits. Three heterotrimers associate to form the active enzyme. The cofactor is Ni cation. In terms of processing, carboxylation allows a single lysine to coordinate two nickel ions.

It localises to the cytoplasm. It carries out the reaction urea + 2 H2O + H(+) = hydrogencarbonate + 2 NH4(+). Its pathway is nitrogen metabolism; urea degradation; CO(2) and NH(3) from urea (urease route): step 1/1. This chain is Urease subunit alpha, found in Escherichia coli O157:H7.